The sequence spans 590 residues: Multidrug resistance ABC transporter ATP-binding and permease protein (590 aa).

A run of 6 helical transmembrane segments spans residues 35-55 (YLFF…QLQV), 79-99 (IALY…LGIF), 150-170 (IPQA…MLQM), 176-196 (LAMI…MTFG), 261-281 (VMML…IYLI), and 292-312 (LGMM…ATFF). One can recognise an ABC transmembrane type-1 domain in the interval 38-317 (FVIGIVAGII…VATFFTELAK (280 aa)). The region spanning 349–584 (LSAHHVDFAY…HPLYAKYVSE (236 aa)) is the ABC transporter domain. 382 to 389 (GPSGGGKS) lines the ATP pocket.

This sequence belongs to the ABC transporter superfamily. Multidrug exporter LmrA (TC 3.A.1.117.1) family. As to quaternary structure, homodimer.

The protein resides in the cell membrane. It carries out the reaction ATP + H2O + xenobioticSide 1 = ADP + phosphate + xenobioticSide 2.. Efflux transporter for a variety of amphiphilic cationic compounds, including antibiotics. The sequence is that of Multidrug resistance ABC transporter ATP-binding and permease protein (lmrA) from Lactococcus lactis subsp. cremoris (strain MG1363).